The sequence spans 273 residues: Ciliary microtubule inner protein 2B (273 aa).

Disordered regions lie at residues 59-85 (TLLPPIQSPRSPVISKGRLPPRRGHER) and 123-164 (RHGE…HASP). Residues 123 to 159 (RHGEQESHQLPDGAKGEREVEEDQLREAEEPPLKQEL) show a composition bias toward basic and acidic residues.

This sequence belongs to the CIMIP2 family. Microtubule inner protein component of sperm flagellar doublet microtubules. Expressed in airway epithelial cells.

The protein resides in the cytoplasm. Its subcellular location is the cytoskeleton. It localises to the cilium axoneme. It is found in the flagellum axoneme. In terms of biological role, microtubule inner protein (MIP) part of the dynein-decorated doublet microtubules (DMTs) in cilia axoneme, which is required for motile cilia beating. This chain is Ciliary microtubule inner protein 2B (Cimip2b), found in Mus musculus (Mouse).